The primary structure comprises 229 residues: MCGYQVRIHDMPSEDRPRERLLKHGPGFLSNAELLSVILRTGSKDENVVSMSSRILSEYNLKQLSQANISQLTKIRGIGPAKASQIAALFELARKLEIFTDDPKRKIRSANDVYSLLYPRHRELKKEHLTALYLDTKNNIIKEEVISIGSLNANIVHPREVFKSALMESSASVILTHNHPSGDPAPSREDIAVTEKLVEGGKILGISVLDHVIIGDGRYVSLKEEGYIS.

The 123-residue stretch at 106-228 folds into the MPN domain; sequence KIRSANDVYS…YVSLKEEGYI (123 aa). Residues histidine 177, histidine 179, and aspartate 190 each coordinate Zn(2+). A JAMM motif motif is present at residues 177-190; the sequence is HNHPSGDPAPSRED.

This sequence belongs to the UPF0758 family.

The polypeptide is UPF0758 protein Mbur_0382 (Methanococcoides burtonii (strain DSM 6242 / NBRC 107633 / OCM 468 / ACE-M)).